A 1129-amino-acid chain; its full sequence is Serine/threonine-protein kinase LATS1 (1129 aa).

Residues 1–11 (MKRGEKPEGYR) are compositionally biased toward basic and acidic residues. Positions 1–71 (MKRGEKPEGY…PRQVRNPPKF (71 aa)) are disordered. Residues 19–30 (PASNYPGSSRQM) are compositionally biased toward polar residues. The segment covering 46 to 64 (DASKAEHNLNKMSTEDPRQ) has biased composition (basic and acidic residues). Residues 100–141 (EVNPQMFQDLQAAGFDEDMVIQALQKTNNRSIEAAVEFISKM) form the UBA domain. Disordered stretches follow at residues 148 to 216 (REQM…RPLS) and 228 to 276 (PSNG…QTKR). Over residues 235–268 (NPPPPPQVRSVTPPPPPRGQTPPPRGTTPPPPSW) the composition is skewed to pro residues. At threonine 246 the chain carries Phosphothreonine. Serine 278 is subject to Phosphoserine. Disordered stretches follow at residues 292 to 317 (PPGA…SQAQ), 363 to 407 (PTGS…VPQS), 432 to 492 (WPQS…TPAP), and 513 to 630 (PTHP…ESRI). Positions 300-312 (YPPPPLTTSPMNP) are enriched in pro residues. Positions 372 to 375 (PPPY) match the PPxY motif 1 motif. The span at 380–392 (ANGQSPSALQTGA) shows a compositional bias: polar residues. Positions 433 to 445 (PQSSSAPAQSSPS) are enriched in low complexity. The span at 453-481 (WQPNIPVRSNSFNNPLGSRASHSANSQPS) shows a compositional bias: polar residues. Serine 463 carries the post-translational modification Phosphoserine; by NUAK1 and NUAK2. Low complexity-rich tracts occupy residues 482 to 492 (ATTVTAITPAP) and 520 to 530 (PQPVQTVQPTP). An interaction with YAP1 region spans residues 525–654 (TVQPTPFSEG…HVENVLKSHQ (130 aa)). The short motif at 555–558 (PPPY) is the PPxY motif 2 element. Over residues 578–608 (PCKDEQPSLPKEDDSEKSADSGDSGDKEKKQ) the composition is skewed to basic and acidic residues. Serine 612 carries the post-translational modification Phosphoserine. Over residues 620–629 (KKDEERRESR) the composition is skewed to basic and acidic residues. Serine 673 is subject to Phosphoserine. Residues 704–1009 (FVKIKTLGIG…ADEIKAHPFF (306 aa)) enclose the Protein kinase domain. ATP is bound by residues 710–718 (LGIGAFGEV) and lysine 733. Residue aspartate 827 is the Proton acceptor of the active site. Residue serine 908 is modified to Phosphoserine; by STK3/MST2. The 80-residue stretch at 1010-1089 (KTIDFSSDLR…RRFFDDNGYP (80 aa)) folds into the AGC-kinase C-terminal domain. Residue threonine 1078 is modified to Phosphothreonine; by STK3/MST2. Residues 1104–1129 (QGSEQQSDEDDQHTSSDGNNRDLVYV) are disordered.

This sequence belongs to the protein kinase superfamily. AGC Ser/Thr protein kinase family. In terms of assembly, complexes with CDK1 in early mitosis. LATS1-associated CDK1 has no mitotic cyclin partner and no apparent kinase activity. Binds phosphorylated ZYX, locating this protein to the mitotic spindle and suggesting a role for actin regulatory proteins during mitosis. Binds to and colocalizes with LIMK1 at the actomyosin contractile ring during cytokinesis. Interacts (via PPxY motif 2) with YAP1 (via WW domains). Interacts with MOB1A and MOB1B. Interacts with LIMD1, WTIP and AJUBA. Interacts with ESR1, DCAF1 and DCAF13; probably recruits DCAF1 and DCAF13 to ESR1 to promote ESR1 ubiquitination and ubiquitin-mediated proteasomal degradation. Interacts with STK3/MST2; this interaction is inhibited in the presence of DLG5. Interacts with SCRIB in the presence of DLG5. Interacts with WWTR1/TAZ. Interacts with WWC1, WWC2 and WWC3 (via their WW domains). Mg(2+) serves as cofactor. Autophosphorylated and phosphorylated during M-phase of the cell cycle. Phosphorylated by STK3/MST2 at Ser-908 and Thr-1078, which results in its activation. Phosphorylated by MAP4Ks; in parallel to STK3/MST2 and resulting to its activation. Phosphorylation at Ser-463 by NUAK1 and NUAK2 leads to decreased protein level and is required to regulate cellular senescence and cellular ploidy.

The protein resides in the cytoplasm. Its subcellular location is the cytoskeleton. It localises to the microtubule organizing center. It is found in the centrosome. The protein localises to the spindle. The protein resides in the midbody. Its subcellular location is the spindle pole body. It catalyses the reaction L-seryl-[protein] + ATP = O-phospho-L-seryl-[protein] + ADP + H(+). The enzyme catalyses L-threonyl-[protein] + ATP = O-phospho-L-threonyl-[protein] + ADP + H(+). Its function is as follows. Negative regulator of YAP1 in the Hippo signaling pathway that plays a pivotal role in organ size control and tumor suppression by restricting proliferation and promoting apoptosis. The core of this pathway is composed of a kinase cascade wherein STK3/MST2 and STK4/MST1, in complex with its regulatory protein SAV1, phosphorylates and activates LATS1/2 in complex with its regulatory protein MOB1, which in turn phosphorylates and inactivates YAP1 oncoprotein and WWTR1/TAZ. Phosphorylation of YAP1 by LATS1 inhibits its translocation into the nucleus to regulate cellular genes important for cell proliferation, cell death, and cell migration. Acts as a tumor suppressor which plays a critical role in maintenance of ploidy through its actions in both mitotic progression and the G1 tetraploidy checkpoint. Negatively regulates G2/M transition by down-regulating CDK1 kinase activity. Involved in the control of p53 expression. Affects cytokinesis by regulating actin polymerization through negative modulation of LIMK1. May also play a role in endocrine function. Plays a role in mammary gland epithelial cell differentiation, both through the Hippo signaling pathway and the intracellular estrogen receptor signaling pathway by promoting the degradation of ESR1. Acts as an activator of the NLRP3 inflammasome by mediating phosphorylation of 'Ser-265' of NLRP3 following NLRP3 palmitoylation, promoting NLRP3 activation by NEK7. This chain is Serine/threonine-protein kinase LATS1, found in Mus musculus (Mouse).